We begin with the raw amino-acid sequence, 273 residues long: Glutamate racemase (273 aa).

Substrate contacts are provided by residues 11–12 (DS) and 43–44 (YG). Residue C74 is the Proton donor/acceptor of the active site. 75 to 76 (NT) lines the substrate pocket. C185 serves as the catalytic Proton donor/acceptor. Residue 186–187 (TH) participates in substrate binding.

This sequence belongs to the aspartate/glutamate racemases family. Homodimer.

The enzyme catalyses L-glutamate = D-glutamate. Its pathway is cell wall biogenesis; peptidoglycan biosynthesis. Its function is as follows. Provides the (R)-glutamate required for cell wall biosynthesis. This is Glutamate racemase from Enterococcus faecalis (strain ATCC 700802 / V583).